We begin with the raw amino-acid sequence, 620 residues long: Zinc metalloproteinase-disintegrin-like ACLD (620 aa).

The N-terminal stretch at 1–20 is a signal peptide; it reads MIQVLLVTLCLAVFPYQGSS. A propeptide spanning residues 21–189 is cleaved from the precursor; sequence IILESGNVND…KKASQLNLTP (169 aa). Residues 199 to 395 form the Peptidase M12B domain; the sequence is KYVEFVVVLD…RRPKCILNEP (197 aa). Glu202 provides a ligand contact to Ca(2+). 2 N-linked (GlcNAc...) asparagine glycosylation sites follow: Asn259 and Asn265. Residue Asp286 participates in Ca(2+) binding. Cystine bridges form between Cys310–Cys390, Cys350–Cys374, and Cys352–Cys357. His335 lines the Zn(2+) pocket. Glu336 is a catalytic residue. Zn(2+)-binding residues include His339 and His345. N-linked (GlcNAc...) asparagine glycosylation occurs at Asn373. Residues Cys390 and Asn393 each coordinate Ca(2+). The N-linked (GlcNAc...) asparagine glycan is linked to Asn396. The region spanning 403–489 is the Disintegrin domain; it reads PPVCGNELLE…ECPTDRFQRN (87 aa). Ca(2+) contacts are provided by Val405, Asn408, Leu410, Glu412, Glu415, and Asp418. Disulfide bonds link Cys406–Cys435, Cys417–Cys430, Cys419–Cys425, Cys429–Cys452, Cys443–Cys449, Cys448–Cys474, Cys461–Cys481, Cys468–Cys500, Cys493–Cys505, Cys512–Cys562, Cys527–Cys573, Cys540–Cys550, Cys557–Cys599, and Cys593–Cys604. The D/ECD-tripeptide motif lies at 467-469; the sequence is DCD. Residues Asn502 and Asn536 are each glycosylated (N-linked (GlcNAc...) asparagine).

Belongs to the venom metalloproteinase (M12B) family. P-III subfamily. P-IIIa sub-subfamily. Monomer. Requires Zn(2+) as cofactor. Expressed by the venom gland.

It is found in the secreted. Inhibited by EDTA and O-phenanthroline. Not inhibited by PMSF, benzamidine, irreversible serine-proteinase inhibitors and cysteine proteinase inhibitor E-64. Its function is as follows. Is a potent activator of prothrombin (F2). Does not elicit any hemorrhagic response. Barely inhibits collagen-induced platelet aggregation. Binds neither collagen, nor the jararhagin-monoclonal antibody MAJar3. Hydrolyzes the Aalpha-chain of fibrin and fibrinogen, without affecting the Bbeta- and gamma-chains. Is capable of triggering endothelial pro-inflammatory and procoagulant cell responses, but fails to trigger apoptosis. Induces von Willebrand factor release, and the expression of both ICAM1 and E-selectin (SELE) (without increase in VCAM1) in endothelial cells (HUVEC). Is also able to up-regulate the synthesis of the coagulation factor TF (F3). Enhances nitric oxide (NO) generation, prostacyclin production and interleukin-8 release. This chain is Zinc metalloproteinase-disintegrin-like ACLD, found in Agkistrodon contortrix laticinctus (Broad-banded copperhead).